We begin with the raw amino-acid sequence, 504 residues long: Anaerobic nitric oxide reductase transcription regulator NorR (504 aa).

Residue Asp-57 is modified to 4-aspartylphosphate. One can recognise a Sigma-54 factor interaction domain in the interval 187–416 (MIGLSPGMTQ…LEHAIHRAVV (230 aa)). ATP is bound by residues 215 to 222 (GETGTGKE) and 278 to 287 (ADNGTLFLDE). The segment at residues 479-498 (WAACARMLETDVANLHRLAK) is a DNA-binding region (H-T-H motif).

The protein operates within nitrogen metabolism; nitric oxide reduction. Required for the expression of anaerobic nitric oxide (NO) reductase, acts as a transcriptional activator for at least the norVW operon. Activation also requires sigma-54. The protein is Anaerobic nitric oxide reductase transcription regulator NorR of Escherichia coli O8 (strain IAI1).